Here is a 930-residue protein sequence, read N- to C-terminus: MKLKDTLNLGKTEFPMRAGLPTKEPVWQKEWEDAKLYQRRQELNQGKPHFTLHDGPPYANGNIHVGHAMNKISKDIIVRSKSMSGFYAPFIPGWDTHGLPIEQVLSKQGVKRKEMDLVEYLKLCREYALSQVDKQREDFKRLGVSGDWENPYVTLTPDYEAAQIRVFGEMANKGYIYRGAKPVYWSWSSESALAEAEIEYHDLVSTSLYYANKVKDGKGVLDTDTYIVVWTTTPFTITASRGLTVGADIDYVLVQPAGEARKFVVAAELLTSLSEKFGWADVQVLETYRGQELNHIVTEHPWDTAVEELVILGDHVTTDSGTGIVHTAPGFGEDDYNVGIANNLEVAVTVDERGIMMKNAGPEFEGQFYEKVVPTVIEKLGNLLLAQEEISHSYPFDWRTKKPIIWRAVPQWFASVSKFRQEILDEIEKVKFHSEWGKVRLYNMIRDRGDWVISRQRAWGVPLPIFYAEDGTAIMVAETIEHVAQLFEEHGSSIWWERDAKDLLPEGFTHPGSPNGEFKKETDIMDVWFDSGSSWNGVVVNRPELTYPADLYLEGSDQYRGWFNSSLITSVANHGVAPYKQILSQGFALDGKGEKMSKSLGNTIAPSDVEKQFGAEILRLWVTSVDSSNDVRISMDILSQVSETYRKIRNTLRFLIANTSDFNPAQDTVAYDELRSVDKYMTIRFNQLVKTIRDAYADFEFLTIYKALVNFINVDLSAFYLDFAKDVVYIEGAKSLERRQMQTVFYDILVKITKLLTPILPHTAEEIWSYLEFEAEDFVQLSELPEAQTSANQEEILDTWAAFMDFRGQAQKALEEARNAKVIGKSLEAHLTVYPNEVVKTLLEAVNSNVAQLLIVSELTIAEEPTPEAALSFEDVAFTVERAAGEVCDRCRRIDPTTAERSYQAVICDHCASIVEENFADAVAEGFEEK.

The short motif at 57 to 67 (PYANGNIHVGH) is the 'HIGH' region element. Glu554 contributes to the L-isoleucyl-5'-AMP binding site. The 'KMSKS' region motif lies at 595 to 599 (KMSKS). Lys598 serves as a coordination point for ATP. Cys888, Cys891, Cys908, and Cys911 together coordinate Zn(2+).

This sequence belongs to the class-I aminoacyl-tRNA synthetase family. IleS type 1 subfamily. Monomer. Zn(2+) serves as cofactor.

Its subcellular location is the cytoplasm. It carries out the reaction tRNA(Ile) + L-isoleucine + ATP = L-isoleucyl-tRNA(Ile) + AMP + diphosphate. Catalyzes the attachment of isoleucine to tRNA(Ile). As IleRS can inadvertently accommodate and process structurally similar amino acids such as valine, to avoid such errors it has two additional distinct tRNA(Ile)-dependent editing activities. One activity is designated as 'pretransfer' editing and involves the hydrolysis of activated Val-AMP. The other activity is designated 'posttransfer' editing and involves deacylation of mischarged Val-tRNA(Ile). The chain is Isoleucine--tRNA ligase from Streptococcus pneumoniae (strain Taiwan19F-14).